The following is a 123-amino-acid chain: UPF0212 protein rrnAC0441 (123 aa).

This sequence belongs to the UPF0212 family.

This chain is UPF0212 protein rrnAC0441, found in Haloarcula marismortui (strain ATCC 43049 / DSM 3752 / JCM 8966 / VKM B-1809) (Halobacterium marismortui).